The primary structure comprises 572 residues: Methionine--tRNA ligase (572 aa).

The 'HIGH' region motif lies at 11-21; that stretch reads PYINGIKHLGN. Cys-143, Cys-146, Cys-156, and Cys-159 together coordinate Zn(2+). A 'KMSKS' region motif is present at residues 346–350; that stretch reads QFSTS. Thr-349 serves as a coordination point for ATP.

This sequence belongs to the class-I aminoacyl-tRNA synthetase family. MetG type 1 subfamily. In terms of assembly, monomer. Zn(2+) is required as a cofactor.

Its subcellular location is the cytoplasm. It carries out the reaction tRNA(Met) + L-methionine + ATP = L-methionyl-tRNA(Met) + AMP + diphosphate. In terms of biological role, is required not only for elongation of protein synthesis but also for the initiation of all mRNA translation through initiator tRNA(fMet) aminoacylation. In Dinoroseobacter shibae (strain DSM 16493 / NCIMB 14021 / DFL 12), this protein is Methionine--tRNA ligase.